The sequence spans 149 residues: Transcription factor HY5-like (149 aa).

Residues 1–77 (MSLQRPNGNS…RRRGRNPVDK (77 aa)) form a disordered region. The segment at 23 to 36 (ESDEELLMVPDMEA) is interaction with COP1. Position 24 is a phosphoserine (Ser24). Residues 55-64 (ELDQTQNGVS) show a composition bias toward polar residues. Residues 78 to 141 (EYRSLKRLLR…TMLRKMLINT (64 aa)) enclose the bZIP domain. The interval 80 to 100 (RSLKRLLRNRVSAQQARERKK) is basic motif. The interval 106–134 (LESRANELQNNNDQLEEKISTLTNENTML) is leucine-zipper.

Belongs to the bZIP family. In terms of assembly, heterodimer; heterodimerizes with HY5 via the leucine-zipper domains. Interacts with COP1 WD40 domain. Interacts with BBX24/STO and BBX25/STH. Post-translationally, ubiquitinated by COP1. Ubiquitination takes place in darkness and leads to its subsequent degradation, thereby preventing the activation of photomorphogenesis signals.

Its subcellular location is the nucleus. Functionally, transcription factor that promotes photomorphogenesis in light. Acts downstream of the light receptor network and directly affects transcription of light-induced genes. Specifically involved in the blue light specific pathway, suggesting that it participates in transmission of cryptochromes (CRY1 and CRY2) signals to downstream responses. In darkness, its degradation prevents the activation of light-induced genes. This is Transcription factor HY5-like (HYH) from Arabidopsis thaliana (Mouse-ear cress).